The primary structure comprises 188 residues: D-glycero-beta-D-manno-heptose-1,7-bisphosphate 7-phosphatase (188 aa).

Zn(2+)-binding residues include Cys-92, His-94, Cys-107, and Cys-109.

This sequence belongs to the GmhB family.

It is found in the cytoplasm. The enzyme catalyses D-glycero-beta-D-manno-heptose 1,7-bisphosphate + H2O = D-glycero-beta-D-manno-heptose 1-phosphate + phosphate. It functions in the pathway nucleotide-sugar biosynthesis; ADP-L-glycero-beta-D-manno-heptose biosynthesis; ADP-L-glycero-beta-D-manno-heptose from D-glycero-beta-D-manno-heptose 7-phosphate: step 2/4. The protein operates within bacterial outer membrane biogenesis; LPS core biosynthesis. Its function is as follows. Converts the D-glycero-beta-D-manno-heptose 1,7-bisphosphate intermediate into D-glycero-beta-D-manno-heptose 1-phosphate by removing the phosphate group at the C-7 position. The protein is D-glycero-beta-D-manno-heptose-1,7-bisphosphate 7-phosphatase (gmhB1) of Photorhabdus laumondii subsp. laumondii (strain DSM 15139 / CIP 105565 / TT01) (Photorhabdus luminescens subsp. laumondii).